Here is a 101-residue protein sequence, read N- to C-terminus: MLKVEKFKKLKRFEVYYCLKNSFLEEVDIEMKYSCSITTIMSNGSASLLMNWEELTPGHCFTSYTTNPIAGDYGLNASAIDGHTEELVATHPAGTLENATQ.

This is an uncharacterized protein from Saccharomyces cerevisiae (strain ATCC 204508 / S288c) (Baker's yeast).